Here is a 940-residue protein sequence, read N- to C-terminus: Isoleucine--tRNA ligase (940 aa).

The short motif at 58 to 68 (PYANGSIHIGH) is the 'HIGH' region element. E564 is a binding site for L-isoleucyl-5'-AMP. Residues 605 to 609 (KMSKS) carry the 'KMSKS' region motif. Position 608 (K608) interacts with ATP. Zn(2+) is bound by residues C903, C906, C923, and C926.

Belongs to the class-I aminoacyl-tRNA synthetase family. IleS type 1 subfamily. In terms of assembly, monomer. Zn(2+) is required as a cofactor.

The protein resides in the cytoplasm. It carries out the reaction tRNA(Ile) + L-isoleucine + ATP = L-isoleucyl-tRNA(Ile) + AMP + diphosphate. Catalyzes the attachment of isoleucine to tRNA(Ile). As IleRS can inadvertently accommodate and process structurally similar amino acids such as valine, to avoid such errors it has two additional distinct tRNA(Ile)-dependent editing activities. One activity is designated as 'pretransfer' editing and involves the hydrolysis of activated Val-AMP. The other activity is designated 'posttransfer' editing and involves deacylation of mischarged Val-tRNA(Ile). The chain is Isoleucine--tRNA ligase from Shewanella sp. (strain W3-18-1).